The chain runs to 913 residues: Vacuolar membrane protease (913 aa).

Topologically, residues 1–15 (MMANYFRSTFKFRKT) are cytoplasmic. A helical membrane pass occupies residues 16 to 36 (TVSTLFVLTVLVISILTWFDA). The Vacuolar portion of the chain corresponds to 37–364 (NKYKSNLPDD…FFVVSARQLY (328 aa)). N-linked (GlcNAc...) asparagine glycosylation occurs at Asn117. Residues His152 and Asp164 each contribute to the Zn(2+) site. Glu196 (proton acceptor) is an active-site residue. 3 residues coordinate Zn(2+): Glu197, Glu222, and His296. The chain crosses the membrane as a helical span at residues 365–385 (VWNIVLLCVLPITLILLRIVC). Over 386–394 (NKLGTWRMP) the chain is Cytoplasmic. The helical transmembrane segment at 395-415 (TSALFTRIPFALFVSSFTIYF) threads the bilayer. Topologically, residues 416–431 (TKELLLQLNPTIWSRN) are vacuolar. Residues 432 to 452 (FILPFLFCISEFLLINTLVLA) traverse the membrane as a helical segment. Residues 453–465 (LFEYLWPIQDFKT) are Cytoplasmic-facing. Residues 466-486 (LSLLELSAIAWLFLLKCTWDL) traverse the membrane as a helical segment. Topologically, residues 487–494 (SSSGFKAT) are vacuolar. A helical transmembrane segment spans residues 495 to 515 (GVYPVTVFYLFISLASMFGLC). At 516–600 (SMCFGKRPNA…TLNYDWSAQY (85 aa)) the chain is on the cytoplasmic side. Positions 540 to 552 (NDTHSIECPRQPE) are enriched in basic and acidic residues. A disordered region spans residues 540–578 (NDTHSIECPRQPEDSETTETSPLINTPSSSVQSSPIASS). Residues 557-566 (TETSPLINTP) show a composition bias toward polar residues. Residues 567-578 (SSSVQSSPIASS) are compositionally biased toward low complexity. Residues 601 to 621 (LLAVPINAFLIWESLFNLFDA) form a helical membrane-spanning segment. Over 622 to 634 (LSMTVQESNKATE) the chain is Vacuolar. Residues 635-655 (AVFKFAIYGAIFLCSPLLPFT) form a helical membrane-spanning segment. The Cytoplasmic portion of the chain corresponds to 656 to 660 (TKLNR). The chain crosses the membrane as a helical span at residues 661 to 681 (FVVIILGVVTILAASFSLFAA). Over 682–913 (PYTELAPLKL…MVTIHKYLEL (232 aa)) the chain is Vacuolar. 3 N-linked (GlcNAc...) asparagine glycosylation sites follow: Asn729, Asn794, and Asn810.

It belongs to the peptidase M28 family. Zn(2+) is required as a cofactor.

The protein localises to the vacuole membrane. May be involved in vacuolar sorting and osmoregulation. The chain is Vacuolar membrane protease from Kluyveromyces lactis (strain ATCC 8585 / CBS 2359 / DSM 70799 / NBRC 1267 / NRRL Y-1140 / WM37) (Yeast).